The following is a 284-amino-acid chain: Undecaprenyl-diphosphatase (284 aa).

8 helical membrane-spanning segments follow: residues 7-27, 44-64, 90-110, 116-136, 167-187, 197-217, 229-249, and 259-279; these read IILG…TGHL, EMFD…LYFH, LWLK…PLND, FYHF…FIVI, VLSL…ALLV, FTFF…ILHF, FGVL…AIKF, and FTFF…YAMF.

Belongs to the UppP family.

The protein localises to the cell membrane. It catalyses the reaction di-trans,octa-cis-undecaprenyl diphosphate + H2O = di-trans,octa-cis-undecaprenyl phosphate + phosphate + H(+). In terms of biological role, catalyzes the dephosphorylation of undecaprenyl diphosphate (UPP). Confers resistance to bacitracin. This chain is Undecaprenyl-diphosphatase, found in Lactococcus lactis subsp. lactis (strain IL1403) (Streptococcus lactis).